We begin with the raw amino-acid sequence, 344 residues long: MSKDVRQLLDKTYGGNPLSREEAKCLFASLVRGELDEVTIAALLMALKVRGETIDEISGAADAMREAANSFPRPALDGGILDIVGTGGDGFNTINISTTATFVAAAAGANVAKHGNRSVSSKSGSSDLLGQFGIELTMAPQTAANCLEALGICFLFAPHYHGGVKHAVPVRQKLATRTLFNVLGPLINPSHPDFMLLGVYSETLVRPIAEVLCALGVKRAMVVHGEGLDEVALHGTTQVCELRNGELVDYSLSPKDFGLEPVQVTELEGGSPEDNALITAAILKGEGKAAHRDAVALNAGCALYVAGLADTPQAGFKLAIDTLASGKAYEKLIGLAAMSQQDKA.

5-phospho-alpha-D-ribose 1-diphosphate-binding positions include Gly85, 88–89, Thr93, 95–98, 113–121, and Ser125; these read GD, NIST, and KHGNRSVSS. Gly85 contacts anthranilate. Ser97 is a Mg(2+) binding site. Anthranilate is bound at residue Asn116. Residue Arg171 participates in anthranilate binding. Residues Asp229 and Glu230 each coordinate Mg(2+).

This sequence belongs to the anthranilate phosphoribosyltransferase family. In terms of assembly, homodimer. Mg(2+) serves as cofactor.

The catalysed reaction is N-(5-phospho-beta-D-ribosyl)anthranilate + diphosphate = 5-phospho-alpha-D-ribose 1-diphosphate + anthranilate. It participates in amino-acid biosynthesis; L-tryptophan biosynthesis; L-tryptophan from chorismate: step 2/5. In terms of biological role, catalyzes the transfer of the phosphoribosyl group of 5-phosphorylribose-1-pyrophosphate (PRPP) to anthranilate to yield N-(5'-phosphoribosyl)-anthranilate (PRA). In Shewanella amazonensis (strain ATCC BAA-1098 / SB2B), this protein is Anthranilate phosphoribosyltransferase.